A 294-amino-acid chain; its full sequence is Beta-glucoside kinase (294 aa).

ATP is bound at residue 5–11 (AFDIGGT).

This sequence belongs to the ROK (NagC/XylR) family.

The enzyme catalyses D-cellobiose + ATP = 6-phospho-beta-D-glucosyl-(1-&gt;4)-D-glucose + ADP + H(+). Its function is as follows. Catalyzes the ATP-dependent phosphorylation of cellobiose to produce cellobiose-6'-P. May have a dual role of kinase and transcriptional regulator of the cellobiose-PTS operon. This Listeria innocua serovar 6a (strain ATCC BAA-680 / CLIP 11262) protein is Beta-glucoside kinase (bglK).